The sequence spans 341 residues: Heat-inducible transcription repressor HrcA (341 aa).

This sequence belongs to the HrcA family.

Functionally, negative regulator of class I heat shock genes (grpE-dnaK-dnaJ and groELS operons). Prevents heat-shock induction of these operons. The protein is Heat-inducible transcription repressor HrcA of Carboxydothermus hydrogenoformans (strain ATCC BAA-161 / DSM 6008 / Z-2901).